The sequence spans 269 residues: Bidirectional sugar transporter SWEET1a (269 aa).

At M1–R6 the chain is on the extracellular side. Residues F7–T27 form a helical membrane-spanning segment. Positions F8–R96 constitute a MtN3/slv 1 domain. Topologically, residues F28–G42 are cytoplasmic. Residues V43–V63 form a helical membrane-spanning segment. Topologically, residues S64 to T72 are extracellular. A helical transmembrane segment spans residues I73–V93. Residues D94 to R100 lie on the Cytoplasmic side of the membrane. A helical membrane pass occupies residues M101–L121. Over A122–K129 the chain is Extracellular. A helical membrane pass occupies residues V130–I150. The 84-residue stretch at C132–K215 folds into the MtN3/slv 2 domain. Residues M151 to P164 are Cytoplasmic-facing. Residues F165–G185 form a helical membrane-spanning segment. Residues R186–F189 are Extracellular-facing. A helical membrane pass occupies residues I190–I210. Topologically, residues Y211–V269 are cytoplasmic.

The protein belongs to the SWEET sugar transporter family. As to quaternary structure, forms homooligomers and/or heterooligomers.

It localises to the cell membrane. In terms of biological role, mediates both low-affinity uptake and efflux of sugar across the plasma membrane. The sequence is that of Bidirectional sugar transporter SWEET1a from Sorghum bicolor (Sorghum).